The sequence spans 307 residues: Fructokinase (307 aa).

The protein belongs to the carbohydrate kinase PfkB family.

The catalysed reaction is D-fructose + ATP = D-fructose 6-phosphate + ADP + H(+). Its function is as follows. Involved in sucrose metabolism. This is Fructokinase (scrK) from Klebsiella pneumoniae.